The chain runs to 205 residues: MKRLAVILITLALVSSMCITNSNEKRENMKNAKVLMVIAPKDFRDEELFEPMAVFESNGLKVDVVSTTKGECVGMLGNKITVEKTIYDVNPDDYVAIVIVGGIGSKEYLWNNTKLIELVKEFYNKNKVVSAICLSPVVLARAGILKGKKATVYPAPEAIEELKKAGAIYEDRGVVVDGNVITAKSPDYARLFGLEVLKAIEKNNE.

It belongs to the peptidase C56 family.

This is an uncharacterized protein from Methanocaldococcus jannaschii (strain ATCC 43067 / DSM 2661 / JAL-1 / JCM 10045 / NBRC 100440) (Methanococcus jannaschii).